The primary structure comprises 177 residues: Large ribosomal subunit protein uL16 (177 aa).

Belongs to the universal ribosomal protein uL16 family.

The polypeptide is Large ribosomal subunit protein uL16 (Natronomonas pharaonis (strain ATCC 35678 / DSM 2160 / CIP 103997 / JCM 8858 / NBRC 14720 / NCIMB 2260 / Gabara) (Halobacterium pharaonis)).